Here is a 560-residue protein sequence, read N- to C-terminus: Ribonuclease J 1 (560 aa).

The Zn(2+) site is built by H76, H78, D80, H81, H144, and D166. 366–370 (HTSGH) serves as a coordination point for substrate. Residue H392 participates in Zn(2+) binding.

This sequence belongs to the metallo-beta-lactamase superfamily. RNA-metabolizing metallo-beta-lactamase-like family. Bacterial RNase J subfamily. In terms of assembly, homodimer, may be a subunit of the RNA degradosome. Requires Zn(2+) as cofactor.

The protein localises to the cytoplasm. Its function is as follows. An RNase that has 5'-3' exonuclease and possibly endonuclease activity. Involved in maturation of rRNA and in some organisms also mRNA maturation and/or decay. Has an overlapping but not completely redundant role with RNase J2 in the decay of mRNA. In Streptococcus pyogenes serotype M3 (strain ATCC BAA-595 / MGAS315), this protein is Ribonuclease J 1.